We begin with the raw amino-acid sequence, 359 residues long: Alanine racemase (359 aa).

The active-site Proton acceptor; specific for D-alanine is the Lys34. Lys34 is modified (N6-(pyridoxal phosphate)lysine). Arg129 contributes to the substrate binding site. The active-site Proton acceptor; specific for L-alanine is the Tyr256. Met304 is a substrate binding site.

This sequence belongs to the alanine racemase family. The cofactor is pyridoxal 5'-phosphate.

The catalysed reaction is L-alanine = D-alanine. Its pathway is amino-acid biosynthesis; D-alanine biosynthesis; D-alanine from L-alanine: step 1/1. Functionally, catalyzes the interconversion of L-alanine and D-alanine. May also act on other amino acids. This Photobacterium profundum (strain SS9) protein is Alanine racemase (alr).